Here is a 162-residue protein sequence, read N- to C-terminus: D-aminoacyl-tRNA deacylase (162 aa).

Positions 145 to 146 match the Gly-cisPro motif, important for rejection of L-amino acids motif; sequence GP.

The protein belongs to the DTD family. Homodimer.

It is found in the cytoplasm. It carries out the reaction glycyl-tRNA(Ala) + H2O = tRNA(Ala) + glycine + H(+). It catalyses the reaction a D-aminoacyl-tRNA + H2O = a tRNA + a D-alpha-amino acid + H(+). In terms of biological role, an aminoacyl-tRNA editing enzyme that deacylates mischarged D-aminoacyl-tRNAs. Also deacylates mischarged glycyl-tRNA(Ala), protecting cells against glycine mischarging by AlaRS. Acts via tRNA-based rather than protein-based catalysis; rejects L-amino acids rather than detecting D-amino acids in the active site. By recycling D-aminoacyl-tRNA to D-amino acids and free tRNA molecules, this enzyme counteracts the toxicity associated with the formation of D-aminoacyl-tRNA entities in vivo and helps enforce protein L-homochirality. The chain is D-aminoacyl-tRNA deacylase from Bifidobacterium longum (strain NCC 2705).